We begin with the raw amino-acid sequence, 459 residues long: Cysteine--tRNA ligase (459 aa).

Cys-28 serves as a coordination point for Zn(2+). Positions 30 to 40 match the 'HIGH' region motif; that stretch reads VTVYDLCHIGH. Zn(2+) contacts are provided by Cys-209, His-234, and Glu-238. The short motif at 266–270 is the 'KMSKS' region element; it reads KMSKS. ATP is bound at residue Lys-269.

It belongs to the class-I aminoacyl-tRNA synthetase family. Monomer. The cofactor is Zn(2+).

Its subcellular location is the cytoplasm. The enzyme catalyses tRNA(Cys) + L-cysteine + ATP = L-cysteinyl-tRNA(Cys) + AMP + diphosphate. The protein is Cysteine--tRNA ligase of Histophilus somni (strain 2336) (Haemophilus somnus).